Here is a 239-residue protein sequence, read N- to C-terminus: tRNA (guanine-N(1)-)-methyltransferase (239 aa).

Residues Gly-108 and 127–132 contribute to the S-adenosyl-L-methionine site; that span reads IGDYVL.

The protein belongs to the RNA methyltransferase TrmD family. In terms of assembly, homodimer.

It localises to the cytoplasm. The enzyme catalyses guanosine(37) in tRNA + S-adenosyl-L-methionine = N(1)-methylguanosine(37) in tRNA + S-adenosyl-L-homocysteine + H(+). Specifically methylates guanosine-37 in various tRNAs. This chain is tRNA (guanine-N(1)-)-methyltransferase, found in Lactobacillus helveticus (strain DPC 4571).